Reading from the N-terminus, the 344-residue chain is UDP-N-acetylglucosamine transporter UGNT1 (344 aa).

Residues M1–K23 are disordered. The next 9 membrane-spanning stretches (helical) occupy residues Y41 to L61, F66 to A86, I92 to V112, T114 to A134, Y167 to A187, F194 to I214, F226 to I246, F264 to L284, and F304 to I324.

Belongs to the TPT transporter family. UGnT (TC 2.A.7.15) subfamily. Expressed in roots, leaves, stems, flowers and siliques.

Its subcellular location is the golgi apparatus membrane. In terms of biological role, mediates the transport of UDP-N-acetylglucosamine (UDP-GlcNAc) across the Golgi apparatus membrane. Delivers an essential substrate for the maturation of N-glycans and the GlcNAc-containing glycosyl inositol phosphorylceramide (GIPC) class of sphingolipids in the Golgi apparatus. The chain is UDP-N-acetylglucosamine transporter UGNT1 from Arabidopsis thaliana (Mouse-ear cress).